The sequence spans 220 residues: 7-cyano-7-deazaguanine synthase (220 aa).

10–20 contributes to the ATP binding site; that stretch reads FSGGQDSTTCL. Zn(2+) contacts are provided by C186, C195, C198, and C201.

It belongs to the QueC family. In terms of assembly, homodimer. Zn(2+) is required as a cofactor.

It carries out the reaction 7-carboxy-7-deazaguanine + NH4(+) + ATP = 7-cyano-7-deazaguanine + ADP + phosphate + H2O + H(+). Its pathway is purine metabolism; 7-cyano-7-deazaguanine biosynthesis. Its function is as follows. Catalyzes the ATP-dependent conversion of 7-carboxy-7-deazaguanine (CDG) to 7-cyano-7-deazaguanine (preQ(0)). The polypeptide is 7-cyano-7-deazaguanine synthase (Bacillus cereus (strain ATCC 14579 / DSM 31 / CCUG 7414 / JCM 2152 / NBRC 15305 / NCIMB 9373 / NCTC 2599 / NRRL B-3711)).